Consider the following 180-residue polypeptide: ATP synthase subunit delta (180 aa).

It belongs to the ATPase delta chain family. In terms of assembly, F-type ATPases have 2 components, F(1) - the catalytic core - and F(0) - the membrane proton channel. F(1) has five subunits: alpha(3), beta(3), gamma(1), delta(1), epsilon(1). F(0) has three main subunits: a(1), b(2) and c(10-14). The alpha and beta chains form an alternating ring which encloses part of the gamma chain. F(1) is attached to F(0) by a central stalk formed by the gamma and epsilon chains, while a peripheral stalk is formed by the delta and b chains.

Its subcellular location is the cell membrane. Functionally, f(1)F(0) ATP synthase produces ATP from ADP in the presence of a proton or sodium gradient. F-type ATPases consist of two structural domains, F(1) containing the extramembraneous catalytic core and F(0) containing the membrane proton channel, linked together by a central stalk and a peripheral stalk. During catalysis, ATP synthesis in the catalytic domain of F(1) is coupled via a rotary mechanism of the central stalk subunits to proton translocation. In terms of biological role, this protein is part of the stalk that links CF(0) to CF(1). It either transmits conformational changes from CF(0) to CF(1) or is implicated in proton conduction. In Alkaliphilus oremlandii (strain OhILAs) (Clostridium oremlandii (strain OhILAs)), this protein is ATP synthase subunit delta.